Reading from the N-terminus, the 27-residue chain is M-ectatotoxin-Eb2a (27 aa).

In terms of tissue distribution, expressed by the venom gland.

The protein resides in the secreted. Its function is as follows. Antimicrobial peptide forming an alpha-helix in watery and membraneous environments, enabling it to perforate membranes. Active against Gram-negative bacteria E.coli DH5alpha (MIC=5 uM), E.coli MH1 (MIC=0.6 uM) and P.aeruginosa PAO1 (MIC=10 uM) and against Gram-positive bacteria B.subtilis VKM B-501 (MIC=0.6 uM) and A.globiformis VKM Ac-1112 (MIC=0.2 uM). Has cytolytic and hemolytic activity. This Ectatomma brunneum (Ant) protein is M-ectatotoxin-Eb2a.